The chain runs to 1614 residues: METAPTRAPPPPPPPLLLLVLYCSLVPAAASPLLLFANRRDVRLVDAGGVKLESTIVASGLEDAAAVDFQFSKGAVYWTDVSEEAIKQTYLNQTGAAAQNIVISGLVSPDGLACDWVGKKLYWTDSETNRIEVANLNGTSRKVLFWQDLDQPRAIALDPAHGYMYWTDWGEAPRIERAGMDGSTRKIIVDSDIYWPNGLTIDLEEQKLYWADAKLSFIHRANLDGSFRQKVVEGSLTHPFALTLSGDTLYWTDWQTRSIHACNKWTGEQRKEILSALYSPMDIQVLSQERQPPFHTPCEEDNGGCSHLCLLSPREPFYSCACPTGVQLQDNGKTCKTGAEEVLLLARRTDLRRISLDTPDFTDIVLQVGDIRHAIAIDYDPLEGYVYWTDDEVRAIRRAYLDGSGAQTLVNTEINDPDGIAVDWVARNLYWTDTGTDRIEVTRLNGTSRKILVSEDLDEPRAIVLHPVMGLMYWTDWGENPKIECANLDGRDRHVLVNTSLGWPNGLALDLQEGKLYWGDAKTDKIEVINIDGTKRKTLLEDKLPHIFGFTLLGDFIYWTDWQRRSIERVHKVKASRDVIIDQLPDLMGLKAVNVAKVVGTNPCADGNGGCSHLCFFTPRATKCGCPIGLELLSDMKTCIIPEAFLVFTSRATIHRISLETNNNDVAIPLTGVKEASALDFDVSNNHIYWTDVSLKTISRAFMNGSSVEHVIEFGLDYPEGMAVDWMGKNLYWADTGTNRIEVARLDGQFRQVLVWRDLDNPRSLALDPTKGYIYWTEWGGKPRIVRAFMDGTNCMTLVDKVGRANDLTIDYADQRLYWTDLDTNMIESSNMLGQERMVIADDLPYPFGLTQYSDYIYWTDWNLHSIERADKTSGRNRTLIQGHLDFVMDILVFHSSRQDGLNDCVHSNGQCGQLCLAIPGGHRCGCASHYTLDPSSRNCSPPSTFLLFSQKFAISRMIPDDQLSPDLVLPLHGLRNVKAINYDPLDKFIYWVDGRQNIKRAKDDGTQPSMLTSPSQSLSPDRQPHDLSIDIYSRTLFWTCEATNTINVHRLDGDAMGVVLRGDRDKPRAIAVNAERGYMYFTNMQDHAAKIERASLDGTEREVLFTTGLIRPVALVVDNALGKLFWVDADLKRIESCDLSGANRLTLEDANIVQPVGLTVLGRHLYWIDRQQQMIERVEKTTGDKRTRVQGRVTHLTGIHAVEEVSLEEFSAHPCARDNGGCSHICIAKGDGTPRCSCPVHLVLLQNLLTCGEPPTCSPDQFACTTGEIDCIPGAWRCDGFPECADQSDEEGCPVCSASQFPCARGQCVDLRLRCDGEADCQDRSDEANCDAVCLPNQFRCTSGQCVLIKQQCDSFPDCADGSDELMCEINKPPSDDIPAHSSAIGPVIGIILSLFVMGGVYFVCQRVMCQRYTGASGPFPHEYVGGAPHVPLNFIAPGGSQHGPFPGIPCSKSVMSSMSLVGGRGSVPLYDRNHVTGASSSSSSSTKATLYPPILNPPPSPATDPSLYNVDVFYSSGIPATARPYRPYVIRGMAPPTTPCSTDVCDSDYSTSRWKSSKYYLDLNSDSDPYPPPPTPHSQYLSAEDSCPPSPGTERSYCHLFPPPPSPCTDSS.

A signal peptide spans 1–30 (METAPTRAPPPPPPPLLLLVLYCSLVPAAA). The beta-propeller 1 stretch occupies residues 31-287 (SPLLLFANRR…YSPMDIQVLS (257 aa)). The Extracellular segment spans residues 31–1383 (SPLLLFANRR…PPSDDIPAHS (1353 aa)). 5 LDL-receptor class B repeats span residues 74–118 (GAVY…DWVG), 119–161 (KKLY…DPAH), 162–205 (GYMY…DLEE), 206–246 (QKLY…TLSG), and 247–289 (DTLY…LSQE). N-linked (GlcNAc...) asparagine glycans are attached at residues Asn92 and Asn137. Residues 294–336 (FHTPCEEDNGGCSHLCLLSPREPFYSCACPTGVQLQDNGKTCK) form the EGF-like 1 domain. Intrachain disulfides connect Cys298/Cys309, Cys305/Cys320, and Cys322/Cys335. The interval 340–601 (EEVLLLARRT…AVNVAKVVGT (262 aa)) is beta-propeller 2. LDL-receptor class B repeat units follow at residues 384 to 426 (GYVY…DWVA), 427 to 469 (RNLY…HPVM), 470 to 513 (GLMY…DLQE), 514 to 556 (GKLY…LGDF), and 557 to 599 (IYWT…AKVV). N-linked (GlcNAc...) asparagine glycans are attached at residues Asn445 and Asn498. The region spanning 600 to 640 (GTNPCADGNGGCSHLCFFTPRATKCGCPIGLELLSDMKTCI) is the EGF-like 2 domain. 3 cysteine pairs are disulfide-bonded: Cys604–Cys615, Cys611–Cys624, and Cys626–Cys639. Residues 643-902 (EAFLVFTSRA…VFHSSRQDGL (260 aa)) form a beta-propeller 3 region. 5 LDL-receptor class B repeats span residues 686–728 (NHIY…DWMG), 729–771 (KNLY…DPTK), 772–814 (GYIY…DYAD), 815–854 (QRLY…TQYS), and 855–897 (DYIY…FHSS). N-linked (GlcNAc...) asparagine glycosylation occurs at Asn704. Asn877 is a glycosylation site (N-linked (GlcNAc...) asparagine). The EGF-like 3 domain maps to 901–941 (GLNDCVHSNGQCGQLCLAIPGGHRCGCASHYTLDPSSRNCS). 3 disulfides stabilise this stretch: Cys905-Cys916, Cys912-Cys925, and Cys927-Cys940. The interval 944 to 1211 (STFLLFSQKF…AVEEVSLEEF (268 aa)) is beta-propeller 4. LDL-receptor class B repeat units follow at residues 988-1034 (KFIY…DIYS), 1035-1077 (RTLF…NAER), 1078-1122 (GYMY…DNAL), 1123-1164 (GKLF…VLGR), and 1165-1206 (HLYW…VEEV). The disordered stretch occupies residues 1002–1025 (AKDDGTQPSMLTSPSQSLSPDRQP). Polar residues predominate over residues 1007 to 1021 (TQPSMLTSPSQSLSP). The EGF-like 4 domain maps to 1212 to 1253 (SAHPCARDNGGCSHICIAKGDGTPRCSCPVHLVLLQNLLTCG). 12 cysteine pairs are disulfide-bonded: Cys1216–Cys1227, Cys1223–Cys1237, Cys1239–Cys1252, Cys1258–Cys1272, Cys1265–Cys1285, Cys1279–Cys1294, Cys1297–Cys1309, Cys1304–Cys1322, Cys1316–Cys1331, Cys1335–Cys1347, Cys1342–Cys1360, and Cys1354–Cys1369. 3 consecutive LDL-receptor class A domains span residues 1257-1295 (TCSP…EGCP), 1296-1332 (VCSA…ANCD), and 1334-1370 (VCLP…LMCE). The helical transmembrane segment at 1384–1406 (SAIGPVIGIILSLFVMGGVYFVC) threads the bilayer. Topologically, residues 1407-1614 (QRVMCQRYTG…PPPSPCTDSS (208 aa)) are cytoplasmic. The disordered stretch occupies residues 1474–1498 (RNHVTGASSSSSSSTKATLYPPILN). A PPPSP motif A motif is present at residues 1499–1505 (PPPSPAT). The PPPSP motif B motif lies at 1537 to 1544 (PPTTPCST). Positions 1567 to 1599 (SDSDPYPPPPTPHSQYLSAEDSCPPSPGTERSY) are disordered. The short motif at 1573 to 1580 (PPPPTPHS) is the PPPSP motif C element. Residues 1590–1595 (PPSPGT) carry the PPPSP motif D motif. The PPPSP motif E signature appears at 1604 to 1611 (PPPPSPCT).

This sequence belongs to the LDLR family. Homodimer; disulfide-linked. Forms phosphorylated oligomer aggregates on Wnt-signaling. Component of a WNT-signaling complex that contains a WNT protein, a FZD protein and LRP5 or LRP6. Interacts with FZD8; the interaction is formed on WNT-binding and signaling. Interacts (via the phosphorylated PPPSP motif domains) with AXIN1; the interaction prevents inhibition of beta-catenin phosphorylation and signaling and is enhanced in the presence of GSK3B and WNT1 or WNT3A. Interacts (via beta-propeller regions 3 and 4) with DKK1; the interaction, enhanced by MESD and/or KREMEN, inhibits beta-catenin signaling by preventing GSK3-mediated phosphorylation of the PPPSP motifs and subsequent, AXIN1 binding. Interacts with CSNK1E. Interacts with SOST; the interaction antagonizes canonical Wnt signaling. Interacts with APCDD1. Interacts with MESD; the interaction prevents the formation of LRP5 aggregates, targets LRP5 to the plasma membrane and, when complexed with KREMEN2, increases DKK1 binding. Interacts with CAPRIN2. In terms of processing, phosphorylation of cytoplasmic PPPSP motifs regulates the signal transduction of the Wnt signaling pathway through acting as a docking site for AXIN1. Widely expressed, with the highest expression levels in liver, heart, and lung and the lowest levels in brain and spleen.

The protein localises to the membrane. It is found in the endoplasmic reticulum. In terms of biological role, acts as a coreceptor with members of the frizzled family of seven-transmembrane spanning receptors to transduce signal by Wnt proteins. Activates the canonical Wnt signaling pathway that controls cell fate determination and self-renewal during embryonic development and adult tissue regeneration. In particular, may play an important role in the development of the posterior patterning of the epiblast during gastrulation. During bone development, regulates osteoblast proliferation and differentiation thus determining bone mass. Mechanistically, the formation of the signaling complex between Wnt ligand, frizzled receptor and LRP5 coreceptor promotes the recruitment of AXIN1 to LRP5, stabilizing beta-catenin/CTNNB1 and activating TCF/LEF-mediated transcriptional programs. Acts as a coreceptor for non-Wnt proteins, such as norrin/NDP. Binding of norrin/NDP to frizzled 4/FZD4-LRP5 receptor complex triggers beta-catenin/CTNNB1-dependent signaling known to be required for retinal vascular development. Plays a role in controlling postnatal vascular regression in retina via macrophage-induced endothelial cell apoptosis. This Mus musculus (Mouse) protein is Low-density lipoprotein receptor-related protein 5.